Here is a 357-residue protein sequence, read N- to C-terminus: DNA replication and repair protein RecF (357 aa).

Residue 30–37 coordinates ATP; sequence GANGSGKT.

The protein belongs to the RecF family.

The protein localises to the cytoplasm. The RecF protein is involved in DNA metabolism; it is required for DNA replication and normal SOS inducibility. RecF binds preferentially to single-stranded, linear DNA. It also seems to bind ATP. The protein is DNA replication and repair protein RecF of Shigella flexneri serotype 5b (strain 8401).